We begin with the raw amino-acid sequence, 525 residues long: GMP synthase [glutamine-hydrolyzing] (525 aa).

The Glutamine amidotransferase type-1 domain maps to 9-207 (RILILDFGSQ…VLQLCACEKL (199 aa)). The active-site Nucleophile is cysteine 86. Residues histidine 181 and glutamate 183 contribute to the active site. Residues 208–400 (WTPANIVEDA…LGLPYDMVYR (193 aa)) enclose the GMPS ATP-PPase domain. ATP is bound at residue 235 to 241 (SGGVDSS).

As to quaternary structure, homodimer.

It catalyses the reaction XMP + L-glutamine + ATP + H2O = GMP + L-glutamate + AMP + diphosphate + 2 H(+). It functions in the pathway purine metabolism; GMP biosynthesis; GMP from XMP (L-Gln route): step 1/1. Functionally, catalyzes the synthesis of GMP from XMP. This chain is GMP synthase [glutamine-hydrolyzing], found in Cellvibrio japonicus (strain Ueda107) (Pseudomonas fluorescens subsp. cellulosa).